We begin with the raw amino-acid sequence, 354 residues long: Guanine nucleotide-binding protein G(o) subunit alpha (354 aa).

The N-myristoyl glycine moiety is linked to residue Gly-2. Residue Cys-3 is the site of S-palmitoyl cysteine attachment. The G-alpha domain occupies 32 to 354 (KDVKLLLLGA…AYNLRGCGLY (323 aa)). Residues 35–48 (KLLLLGAGESGKST) are G1 motif. Residues Glu-43, Lys-46, Ser-47, Thr-48, Ser-152, Leu-176, Arg-177, Thr-178, and Arg-179 each contribute to the GTP site. A Mg(2+)-binding site is contributed by Ser-47. Residues 174–182 (DILRTRVKT) form a G2 motif region. A Mg(2+)-binding site is contributed by Thr-182. The interval 197 to 206 (FRLFDVGGQR) is G3 motif. Positions 266–273 (ILFLNKKD) are G4 motif. The GTP site is built by Asn-270, Asp-273, and Cys-325. The segment at 324–329 (TCATDT) is G5 motif.

This sequence belongs to the G-alpha family. G(i/o/t/z) subfamily. As to quaternary structure, g proteins are composed of 3 units; alpha, beta and gamma.

The catalysed reaction is GTP + H2O = GDP + phosphate + H(+). Its function is as follows. Guanine nucleotide-binding proteins (G proteins) function as transducers downstream of G protein-coupled receptors (GPCRs) in numerous signaling cascades. The alpha chain contains the guanine nucleotide binding site and alternates between an active, GTP-bound state and an inactive, GDP-bound state. Signaling by an activated GPCR promotes GDP release and GTP binding. The alpha subunit has a low GTPase activity that converts bound GTP to GDP, thereby terminating the signal. Both GDP release and GTP hydrolysis are modulated by numerous regulatory proteins. Signaling is mediated via effector proteins, such as adenylate cyclase. Inhibits adenylate cyclase activity, leading to decreased intracellular cAMP levels. The sequence is that of Guanine nucleotide-binding protein G(o) subunit alpha (gna0) from Xenopus laevis (African clawed frog).